We begin with the raw amino-acid sequence, 303 residues long: Uricase (303 aa).

Catalysis depends on charge relay system residues Lys12 and Thr60. Residues Thr60, Asp61, Phe162, Arg179, Val234, Gln235, and Asn261 each contribute to the urate site. His263 serves as the catalytic Charge relay system. Positions 301 to 303 (TKL) match the Microbody targeting signal motif.

This sequence belongs to the uricase family.

It is found in the peroxisome. The catalysed reaction is urate + O2 + H2O = 5-hydroxyisourate + H2O2. It participates in purine metabolism; urate degradation; (S)-allantoin from urate: step 1/3. In terms of biological role, catalyzes the oxidation of uric acid to 5-hydroxyisourate, which is further processed to form (S)-allantoin. This Cyberlindnera jadinii (Torula yeast) protein is Uricase.